We begin with the raw amino-acid sequence, 277 residues long: Large ribosomal subunit protein uL2c (277 aa).

The tract at residues arginine 30–arginine 60 is disordered. Over residues serine 51–arginine 60 the composition is skewed to basic residues.

This sequence belongs to the universal ribosomal protein uL2 family. Part of the 50S ribosomal subunit.

It localises to the plastid. The protein resides in the chloroplast. This chain is Large ribosomal subunit protein uL2c (rpl2), found in Angiopteris evecta (Mule's foot fern).